A 38-amino-acid chain; its full sequence is MMMFITVYDINQKQKKRYGLRGCNLNLKATVLPLHKRI.

It belongs to the asfivirus C84L family.

This is an uncharacterized protein from Ornithodoros (relapsing fever ticks).